The following is a 277-amino-acid chain: UPF0276 protein PP_2398 (277 aa).

This sequence belongs to the UPF0276 family.

The chain is UPF0276 protein PP_2398 from Pseudomonas putida (strain ATCC 47054 / DSM 6125 / CFBP 8728 / NCIMB 11950 / KT2440).